Here is a 174-residue protein sequence, read N- to C-terminus: Protein CURVATURE THYLAKOID 1B, chloroplastic (174 aa).

Positions 1 to 20 (MASLSVSSSSTIIDSRAPPS) are disordered. The N-terminal 63 residues, 1–63 (MASLSVSSSS…RKIVRNVVTR (63 aa)), are a transit peptide targeting the chloroplast. Alanine 64 is modified (N-acetylalanine). The Stromal portion of the chain corresponds to 64–100 (ATTEVGEAPATTTEAETTELPEIVKTAQEAWEKVDDK). Residues 101 to 121 (YAIGSLAFAGVVALWGSAGMI) form a helical membrane-spanning segment. Over 122 to 126 (SAIDR) the chain is Lumenal. The helical transmembrane segment at 127 to 147 (LPLVPGVLELVGIGYTGWFTY) threads the bilayer. Residues 148 to 174 (KNLVFKPDREALFEKVKSTYKDILGSS) are Stromal-facing.

It belongs to the CURT family. In terms of assembly, homo- and heterodimers and trimers. Interacts with PSAL. Post-translationally, phosphorylated on either Thr-65 or Thr-66 by a threonine specific thylakoid kinase.

Its subcellular location is the plastid. It localises to the chloroplast thylakoid membrane. Functionally, determines thylakoid architecture by inducing membrane curvature. In Arabidopsis thaliana (Mouse-ear cress), this protein is Protein CURVATURE THYLAKOID 1B, chloroplastic (CURT1B).